The chain runs to 485 residues: D-alanine--D-alanyl carrier protein ligase (485 aa).

Residue 144-145 participates in ATP binding; sequence TS. Residue Asp-189 participates in D-alanine binding. ATP is bound at residue 284-289; that stretch reads NTYGPT. Residue Val-293 coordinates D-alanine. The ATP site is built by Asp-365 and Lys-473. Lys-473 is a D-alanine binding site.

Belongs to the ATP-dependent AMP-binding enzyme family. DltA subfamily.

The protein localises to the cytoplasm. The enzyme catalyses holo-[D-alanyl-carrier protein] + D-alanine + ATP = D-alanyl-[D-alanyl-carrier protein] + AMP + diphosphate. It participates in cell wall biogenesis; lipoteichoic acid biosynthesis. Catalyzes the first step in the D-alanylation of lipoteichoic acid (LTA), the activation of D-alanine and its transfer onto the D-alanyl carrier protein (Dcp) DltC. In an ATP-dependent two-step reaction, forms a high energy D-alanyl-AMP intermediate, followed by transfer of the D-alanyl residue as a thiol ester to the phosphopantheinyl prosthetic group of the Dcp. D-alanylation of LTA plays an important role in modulating the properties of the cell wall in Gram-positive bacteria, influencing the net charge of the cell wall. In Staphylococcus aureus (strain USA300), this protein is D-alanine--D-alanyl carrier protein ligase.